A 351-amino-acid polypeptide reads, in one-letter code: 3-dehydroquinate synthase (351 aa).

Residues 60–65, 94–98, 118–119, Lys131, Lys140, and 158–161 contribute to the NAD(+) site; these read DGEEYK, GVISD, TT, and FLKT. Glu173, His239, and His256 together coordinate Zn(2+).

The protein belongs to the sugar phosphate cyclases superfamily. Dehydroquinate synthase family. Co(2+) serves as cofactor. Zn(2+) is required as a cofactor. Requires NAD(+) as cofactor.

It localises to the cytoplasm. The enzyme catalyses 7-phospho-2-dehydro-3-deoxy-D-arabino-heptonate = 3-dehydroquinate + phosphate. The protein operates within metabolic intermediate biosynthesis; chorismate biosynthesis; chorismate from D-erythrose 4-phosphate and phosphoenolpyruvate: step 2/7. In terms of biological role, catalyzes the conversion of 3-deoxy-D-arabino-heptulosonate 7-phosphate (DAHP) to dehydroquinate (DHQ). The chain is 3-dehydroquinate synthase from Campylobacter jejuni subsp. jejuni serotype O:6 (strain 81116 / NCTC 11828).